We begin with the raw amino-acid sequence, 325 residues long: Ribonucleoside-diphosphate reductase small chain (325 aa).

Positions 74, 105, and 108 each coordinate Fe cation. The active site involves tyrosine 112. Fe cation contacts are provided by glutamate 168, glutamate 202, and histidine 205.

It belongs to the ribonucleoside diphosphate reductase small chain family. In terms of assembly, heterodimer of a large and a small chain. Requires Fe cation as cofactor.

It catalyses the reaction a 2'-deoxyribonucleoside 5'-diphosphate + [thioredoxin]-disulfide + H2O = a ribonucleoside 5'-diphosphate + [thioredoxin]-dithiol. Its function is as follows. Ribonucleoside-diphosphate reductase holoenzyme provides the precursors necessary for viral DNA synthesis. Allows virus growth in non-dividing cells. Catalyzes the biosynthesis of deoxyribonucleotides from the corresponding ribonucleotides. In Yaba-like disease virus (YLDV), this protein is Ribonucleoside-diphosphate reductase small chain.